The chain runs to 215 residues: V-type ATP synthase subunit D (215 aa).

This sequence belongs to the V-ATPase D subunit family.

Functionally, produces ATP from ADP in the presence of a proton gradient across the membrane. The protein is V-type ATP synthase subunit D of Anaeromyxobacter sp. (strain Fw109-5).